The sequence spans 187 residues: MTVSASKTAQQLKYIKDSIKTIPDYPKAGILFRDVTSLLENPKAYSASIELLSEHYSESGVTKVVGTEARGFLFGAPVALALGVGFVPVRKPGKLPRETISESYELEYGTDTLEIHTDSIQPGDKVLVVDDLLATGGTIEATVKLIRRLGGEVVHAAFIINLPELGGEARLTQQGIHCYSLVSFDGH.

This sequence belongs to the purine/pyrimidine phosphoribosyltransferase family. As to quaternary structure, homodimer.

It is found in the cytoplasm. It carries out the reaction AMP + diphosphate = 5-phospho-alpha-D-ribose 1-diphosphate + adenine. It functions in the pathway purine metabolism; AMP biosynthesis via salvage pathway; AMP from adenine: step 1/1. Its function is as follows. Catalyzes a salvage reaction resulting in the formation of AMP, that is energically less costly than de novo synthesis. The chain is Adenine phosphoribosyltransferase from Yersinia pseudotuberculosis serotype I (strain IP32953).